Consider the following 196-residue polypeptide: ATP-dependent Clp protease proteolytic subunit (196 aa).

S101 acts as the Nucleophile in catalysis. The active site involves H126.

This sequence belongs to the peptidase S14 family. As to quaternary structure, component of the chloroplastic Clp protease core complex.

Its subcellular location is the plastid. The protein localises to the chloroplast stroma. It carries out the reaction Hydrolysis of proteins to small peptides in the presence of ATP and magnesium. alpha-casein is the usual test substrate. In the absence of ATP, only oligopeptides shorter than five residues are hydrolyzed (such as succinyl-Leu-Tyr-|-NHMec, and Leu-Tyr-Leu-|-Tyr-Trp, in which cleavage of the -Tyr-|-Leu- and -Tyr-|-Trp bonds also occurs).. In terms of biological role, cleaves peptides in various proteins in a process that requires ATP hydrolysis. Has a chymotrypsin-like activity. Plays a major role in the degradation of misfolded proteins. The protein is ATP-dependent Clp protease proteolytic subunit of Coffea arabica (Arabian coffee).